The primary structure comprises 299 residues: Prolyl 4-hydroxylase 2 (299 aa).

The Cytoplasmic portion of the chain corresponds to 1-5; that stretch reads MSMSR. A helical; Signal-anchor for type II membrane protein membrane pass occupies residues 6-26; the sequence is LGLLLFVAILLVLLQSSTCLI. Residues 27–299 lie on the Lumenal side of the membrane; the sequence is SSPSSIINPS…GNCRRSCKAC (273 aa). A Fe2OG dioxygenase domain is found at 121-246; it reads NGEDLQVLRY…KWSATKWIHV (126 aa). The Fe cation site is built by His139 and Asp141. N-linked (GlcNAc...) asparagine glycosylation occurs at Asn165. His227 contacts Fe cation. Residue Lys237 participates in 2-oxoglutarate binding. N-linked (GlcNAc...) asparagine glycosylation is found at Asn258 and Asn263. The region spanning 259–299 is the ShKT domain; that stretch reads CTDVNESCERWAVLGECGKNPEYMVGTPEIPGNCRRSCKAC. 3 disulfide bridges follow: Cys259-Cys299, Cys266-Cys292, and Cys275-Cys296.

It belongs to the P4HA family. It depends on Fe(2+) as a cofactor. L-ascorbate is required as a cofactor. Expressed in epidermal root hair cells (trichoblasts).

The protein localises to the endoplasmic reticulum membrane. It localises to the golgi apparatus membrane. The enzyme catalyses L-prolyl-[collagen] + 2-oxoglutarate + O2 = trans-4-hydroxy-L-prolyl-[collagen] + succinate + CO2. Functionally, catalyzes the post-translational formation of 4-hydroxyproline in -Xaa-Pro-Gly- sequences in proline-rich peptide sequences of plant glycoproteins and other proteins. Hydroxyprolines are important constituent of many plant cell wall glycoproteins such as extensins, hydroxyproline-rich glycoproteins, lectins and arabinogalactan proteins. Possesses high affinity for leucine-rich repeat and proline-rich extensins of root cell walls that are essential for root hair development. Hydroxyprolines define the subsequent O-glycosylation sites by arabinosyltransferases which elongate the O-arabinosides on extensins. Has low affinity for the substrates tested in vitro. This Arabidopsis thaliana (Mouse-ear cress) protein is Prolyl 4-hydroxylase 2.